A 203-amino-acid polypeptide reads, in one-letter code: Pectinesterase inhibitor 12 (203 aa).

Residues 1 to 26 (MRMSKALAAVVAISVSLSAAAMGVDA) form the signal peptide. Disulfide bonds link Cys-32–Cys-47 and Cys-100–Cys-140.

Belongs to the PMEI family.

The protein localises to the secreted. It localises to the extracellular space. The protein resides in the apoplast. Pectin methylesterase (PME) inhibitor that inhibits PME in vitro. This is Pectinesterase inhibitor 12 from Oryza sativa subsp. japonica (Rice).